Here is a 231-residue protein sequence, read N- to C-terminus: 2-C-methyl-D-erythritol 4-phosphate cytidylyltransferase (231 aa).

The protein belongs to the IspD/TarI cytidylyltransferase family. IspD subfamily.

It catalyses the reaction 2-C-methyl-D-erythritol 4-phosphate + CTP + H(+) = 4-CDP-2-C-methyl-D-erythritol + diphosphate. It functions in the pathway isoprenoid biosynthesis; isopentenyl diphosphate biosynthesis via DXP pathway; isopentenyl diphosphate from 1-deoxy-D-xylulose 5-phosphate: step 2/6. Catalyzes the formation of 4-diphosphocytidyl-2-C-methyl-D-erythritol from CTP and 2-C-methyl-D-erythritol 4-phosphate (MEP). This Lysinibacillus sphaericus (strain C3-41) protein is 2-C-methyl-D-erythritol 4-phosphate cytidylyltransferase.